A 163-amino-acid chain; its full sequence is MQRIAVVPGSFDPVTLGHLDVIRRAARLYDELVVLVVHNPGKTPMLPLGERVALIERVIRDAGLPDTVRVDSWGAGLLVDYCRQVGATVLVKGVRSQLDVTYETPMALVNRDLADVETVLLLPDPAHAHVSSSLVRQVEALGGDVTPYVPAAVADALAVRRAG.

Serine 10 serves as a coordination point for substrate. ATP is bound by residues 10–11 (SF) and histidine 18. Residues lysine 42, leucine 78, and lysine 92 each coordinate substrate. ATP contacts are provided by residues 93–95 (GVR), glutamate 103, and 127–133 (HAHVSSS).

The protein belongs to the bacterial CoaD family. Homohexamer. Mg(2+) is required as a cofactor.

The protein localises to the cytoplasm. The catalysed reaction is (R)-4'-phosphopantetheine + ATP + H(+) = 3'-dephospho-CoA + diphosphate. The protein operates within cofactor biosynthesis; coenzyme A biosynthesis; CoA from (R)-pantothenate: step 4/5. In terms of biological role, reversibly transfers an adenylyl group from ATP to 4'-phosphopantetheine, yielding dephospho-CoA (dPCoA) and pyrophosphate. The protein is Phosphopantetheine adenylyltransferase of Clavibacter michiganensis subsp. michiganensis (strain NCPPB 382).